The primary structure comprises 530 residues: Bifunctional purine biosynthesis protein PurH (530 aa).

In terms of domain architecture, MGS-like spans 1-148; the sequence is MNNARPIHRA…KNHKDVAIVV (148 aa).

Belongs to the PurH family.

The catalysed reaction is (6R)-10-formyltetrahydrofolate + 5-amino-1-(5-phospho-beta-D-ribosyl)imidazole-4-carboxamide = 5-formamido-1-(5-phospho-D-ribosyl)imidazole-4-carboxamide + (6S)-5,6,7,8-tetrahydrofolate. It carries out the reaction IMP + H2O = 5-formamido-1-(5-phospho-D-ribosyl)imidazole-4-carboxamide. It participates in purine metabolism; IMP biosynthesis via de novo pathway; 5-formamido-1-(5-phospho-D-ribosyl)imidazole-4-carboxamide from 5-amino-1-(5-phospho-D-ribosyl)imidazole-4-carboxamide (10-formyl THF route): step 1/1. It functions in the pathway purine metabolism; IMP biosynthesis via de novo pathway; IMP from 5-formamido-1-(5-phospho-D-ribosyl)imidazole-4-carboxamide: step 1/1. The protein is Bifunctional purine biosynthesis protein PurH of Vibrio cholerae serotype O1 (strain ATCC 39541 / Classical Ogawa 395 / O395).